A 584-amino-acid polypeptide reads, in one-letter code: Aspartate--tRNA(Asp/Asn) ligase (584 aa).

An L-aspartate-binding site is contributed by Glu-177. The aspartate stretch occupies residues 201-204 (QLFK). Arg-223 lines the L-aspartate pocket. ATP-binding positions include 223 to 225 (RDE) and Gln-232. His-447 contributes to the L-aspartate binding site. Residue Glu-481 participates in ATP binding. Position 488 (Arg-488) interacts with L-aspartate. 533–536 (GLDR) lines the ATP pocket.

The protein belongs to the class-II aminoacyl-tRNA synthetase family. Type 1 subfamily. As to quaternary structure, homodimer.

Its subcellular location is the cytoplasm. The catalysed reaction is tRNA(Asx) + L-aspartate + ATP = L-aspartyl-tRNA(Asx) + AMP + diphosphate. Its function is as follows. Aspartyl-tRNA synthetase with relaxed tRNA specificity since it is able to aspartylate not only its cognate tRNA(Asp) but also tRNA(Asn). Reaction proceeds in two steps: L-aspartate is first activated by ATP to form Asp-AMP and then transferred to the acceptor end of tRNA(Asp/Asn). The polypeptide is Aspartate--tRNA(Asp/Asn) ligase (Chlamydia abortus (strain DSM 27085 / S26/3) (Chlamydophila abortus)).